The chain runs to 177 residues: Probable inosine/xanthosine triphosphatase (177 aa).

This sequence belongs to the YjjX NTPase family. In terms of assembly, homodimer. Requires Mg(2+) as cofactor. Mn(2+) serves as cofactor.

It catalyses the reaction XTP + H2O = XDP + phosphate + H(+). It carries out the reaction ITP + H2O = IDP + phosphate + H(+). In terms of biological role, phosphatase that hydrolyzes non-canonical purine nucleotides such as XTP and ITP to their respective diphosphate derivatives. Probably excludes non-canonical purines from DNA/RNA precursor pool, thus preventing their incorporation into DNA/RNA and avoiding chromosomal lesions. This chain is Probable inosine/xanthosine triphosphatase, found in Halalkalibacterium halodurans (strain ATCC BAA-125 / DSM 18197 / FERM 7344 / JCM 9153 / C-125) (Bacillus halodurans).